The sequence spans 156 residues: Probable histone H2A.6 (156 aa).

Disordered regions lie at residues 1-26 (MDVG…KKPV) and 129-156 (KKTA…QARS). Over residues 9 to 26 (AAKKAVGRKLGGPKKKPV) the composition is skewed to basic residues. A compositionally biased stretch (basic and acidic residues) spans 130–147 (KTAEKADKPAKASKDKAA). The SPKK motif motif lies at 149–152 (SPKK).

Belongs to the histone H2A family. The nucleosome is a histone octamer containing two molecules each of H2A, H2B, H3 and H4 assembled in one H3-H4 heterotetramer and two H2A-H2B heterodimers. The octamer wraps approximately 147 bp of DNA.

It is found in the nucleus. It localises to the chromosome. Its function is as follows. Core component of nucleosome. Nucleosomes wrap and compact DNA into chromatin, limiting DNA accessibility to the cellular machineries which require DNA as a template. Histones thereby play a central role in transcription regulation, DNA repair, DNA replication and chromosomal stability. DNA accessibility is regulated via a complex set of post-translational modifications of histones, also called histone code, and nucleosome remodeling. The protein is Probable histone H2A.6 of Oryza sativa subsp. indica (Rice).